A 151-amino-acid polypeptide reads, in one-letter code: Cathelicidin-3 (151 aa).

An N-terminal signal peptide occupies residues 1 to 17 (MLSCWVLLLALLGGACA). The propeptide occupies 18–122 (LPAPLGYSQA…TCVDSMADPV (105 aa)). Intrachain disulfides connect cysteine 75/cysteine 86 and cysteine 97/cysteine 114. A helical transmembrane segment spans residues 128 to 148 (WPLVPVAINTVAAGINLYKAI).

It belongs to the cathelicidin family. In terms of tissue distribution, detected in bone marrow, liver and lung.

It localises to the secreted. The protein resides in the membrane. May bind bacterial lipopolysaccharide (LPS). May have antimicrobial activity and play a role in the innate immune response. The chain is Cathelicidin-3 (CATHL3) from Gallus gallus (Chicken).